The following is a 156-amino-acid chain: MTERKLIHIFTDGSCLGNPGPGGYGIVMNYKGHTKEMSDGFALTTNNRMELLAPIIALESLKEPCRVVLTSDSQYMRQGIMTWIHGWKKKGWMTSNRTPVKNVDLWKRLDKVSQMHTIDWQWVKGHAGHAENERCDILARSAAEANPTQIDEGYQP.

Residues 3–144 enclose the RNase H type-1 domain; sequence ERKLIHIFTD…CDILARSAAE (142 aa). Positions 12, 50, 72, and 136 each coordinate Mg(2+).

This sequence belongs to the RNase H family. As to quaternary structure, monomer. Mg(2+) serves as cofactor.

The protein localises to the cytoplasm. It carries out the reaction Endonucleolytic cleavage to 5'-phosphomonoester.. Its function is as follows. Endonuclease that specifically degrades the RNA of RNA-DNA hybrids. The sequence is that of Ribonuclease H from Shewanella putrefaciens (strain CN-32 / ATCC BAA-453).